A 359-amino-acid polypeptide reads, in one-letter code: 3-dehydroquinate synthase (359 aa).

NAD(+)-binding positions include 71–76 (DGEQFK), 105–109 (GVIGD), 129–130 (TT), Lys142, Lys151, and 169–172 (CLHT). Positions 184, 247, and 264 each coordinate Zn(2+).

This sequence belongs to the sugar phosphate cyclases superfamily. Dehydroquinate synthase family. Requires Co(2+) as cofactor. The cofactor is Zn(2+). NAD(+) serves as cofactor.

It is found in the cytoplasm. The catalysed reaction is 7-phospho-2-dehydro-3-deoxy-D-arabino-heptonate = 3-dehydroquinate + phosphate. Its pathway is metabolic intermediate biosynthesis; chorismate biosynthesis; chorismate from D-erythrose 4-phosphate and phosphoenolpyruvate: step 2/7. Catalyzes the conversion of 3-deoxy-D-arabino-heptulosonate 7-phosphate (DAHP) to dehydroquinate (DHQ). The chain is 3-dehydroquinate synthase from Shewanella putrefaciens (strain CN-32 / ATCC BAA-453).